We begin with the raw amino-acid sequence, 365 residues long: Chorismate synthase (365 aa).

Over residues 41 to 51 (IQKELDRRRPG) the composition is skewed to basic and acidic residues. Residues 41–62 (IQKELDRRRPGQSEVSTPRSEA) are disordered. Residue arginine 48 coordinates NADP(+). FMN is bound by residues 125–127 (RSS), glycine 285, 300–304 (KPTPS), and arginine 327.

The protein belongs to the chorismate synthase family. FMNH2 serves as cofactor.

The catalysed reaction is 5-O-(1-carboxyvinyl)-3-phosphoshikimate = chorismate + phosphate. It functions in the pathway metabolic intermediate biosynthesis; chorismate biosynthesis; chorismate from D-erythrose 4-phosphate and phosphoenolpyruvate: step 7/7. Functionally, catalyzes the anti-1,4-elimination of the C-3 phosphate and the C-6 proR hydrogen from 5-enolpyruvylshikimate-3-phosphate (EPSP) to yield chorismate, which is the branch point compound that serves as the starting substrate for the three terminal pathways of aromatic amino acid biosynthesis. This reaction introduces a second double bond into the aromatic ring system. The chain is Chorismate synthase from Methanosarcina mazei (strain ATCC BAA-159 / DSM 3647 / Goe1 / Go1 / JCM 11833 / OCM 88) (Methanosarcina frisia).